The chain runs to 322 residues: Tetraacyldisaccharide 4'-kinase (322 aa).

54 to 61 is an ATP binding site; the sequence is SVGGTGKT.

Belongs to the LpxK family.

The enzyme catalyses a lipid A disaccharide + ATP = a lipid IVA + ADP + H(+). It functions in the pathway glycolipid biosynthesis; lipid IV(A) biosynthesis; lipid IV(A) from (3R)-3-hydroxytetradecanoyl-[acyl-carrier-protein] and UDP-N-acetyl-alpha-D-glucosamine: step 6/6. Its function is as follows. Transfers the gamma-phosphate of ATP to the 4'-position of a tetraacyldisaccharide 1-phosphate intermediate (termed DS-1-P) to form tetraacyldisaccharide 1,4'-bis-phosphate (lipid IVA). The sequence is that of Tetraacyldisaccharide 4'-kinase from Francisella philomiragia subsp. philomiragia (strain ATCC 25017 / CCUG 19701 / FSC 153 / O#319-036).